The following is a 363-amino-acid chain: UDP-N-acetylglucosamine--N-acetylmuramyl-(pentapeptide) pyrophosphoryl-undecaprenol N-acetylglucosamine transferase (363 aa).

UDP-N-acetyl-alpha-D-glucosamine is bound by residues Thr-21–Gly-23, Asn-129, Arg-170, Ser-196, and Gln-290.

It belongs to the glycosyltransferase 28 family. MurG subfamily.

It is found in the cell inner membrane. It carries out the reaction di-trans,octa-cis-undecaprenyl diphospho-N-acetyl-alpha-D-muramoyl-L-alanyl-D-glutamyl-meso-2,6-diaminopimeloyl-D-alanyl-D-alanine + UDP-N-acetyl-alpha-D-glucosamine = di-trans,octa-cis-undecaprenyl diphospho-[N-acetyl-alpha-D-glucosaminyl-(1-&gt;4)]-N-acetyl-alpha-D-muramoyl-L-alanyl-D-glutamyl-meso-2,6-diaminopimeloyl-D-alanyl-D-alanine + UDP + H(+). It participates in cell wall biogenesis; peptidoglycan biosynthesis. Cell wall formation. Catalyzes the transfer of a GlcNAc subunit on undecaprenyl-pyrophosphoryl-MurNAc-pentapeptide (lipid intermediate I) to form undecaprenyl-pyrophosphoryl-MurNAc-(pentapeptide)GlcNAc (lipid intermediate II). This Synechococcus sp. (strain ATCC 27144 / PCC 6301 / SAUG 1402/1) (Anacystis nidulans) protein is UDP-N-acetylglucosamine--N-acetylmuramyl-(pentapeptide) pyrophosphoryl-undecaprenol N-acetylglucosamine transferase.